We begin with the raw amino-acid sequence, 143 residues long: Anti-sigma F factor (143 aa).

This sequence belongs to the anti-sigma-factor family.

It carries out the reaction L-seryl-[protein] + ATP = O-phospho-L-seryl-[protein] + ADP + H(+). The catalysed reaction is L-threonyl-[protein] + ATP = O-phospho-L-threonyl-[protein] + ADP + H(+). Functionally, binds to sigma F and blocks its ability to form an RNA polymerase holoenzyme (E-sigma F). Phosphorylates SpoIIAA on a serine residue. This phosphorylation may enable SpoIIAA to act as an anti-anti-sigma factor that counteracts SpoIIAB and thus releases sigma F from inhibition. In Clostridium novyi (strain NT), this protein is Anti-sigma F factor.